Consider the following 366-residue polypeptide: Outer membrane porin C 2 (366 aa).

The first 21 residues, 1–21 (MKLKIVAVVVTGLLAANVAHA), serve as a signal peptide directing secretion.

It belongs to the Gram-negative porin family. As to quaternary structure, homotrimer. Forms mixed heterotrimers with OmpF and with PhoE; other mixed heterotrimers are also probable.

Its subcellular location is the cell outer membrane. Forms pores that allow passive diffusion of small molecules across the outer membrane. Plays a role in virulence. The polypeptide is Outer membrane porin C 2 (Shigella flexneri serotype 5a (strain M90T)).